The sequence spans 350 residues: Nicotinate-nucleotide--dimethylbenzimidazole phosphoribosyltransferase (350 aa).

The active-site Proton acceptor is the Glu316.

This sequence belongs to the CobT family.

The enzyme catalyses 5,6-dimethylbenzimidazole + nicotinate beta-D-ribonucleotide = alpha-ribazole 5'-phosphate + nicotinate + H(+). It functions in the pathway nucleoside biosynthesis; alpha-ribazole biosynthesis; alpha-ribazole from 5,6-dimethylbenzimidazole: step 1/2. Functionally, catalyzes the synthesis of alpha-ribazole-5'-phosphate from nicotinate mononucleotide (NAMN) and 5,6-dimethylbenzimidazole (DMB). In Pseudomonas savastanoi pv. phaseolicola (strain 1448A / Race 6) (Pseudomonas syringae pv. phaseolicola (strain 1448A / Race 6)), this protein is Nicotinate-nucleotide--dimethylbenzimidazole phosphoribosyltransferase.